Reading from the N-terminus, the 733-residue chain is Phosphoribosylformylglycinamidine synthase subunit PurL (733 aa).

His-32 is an active-site residue. Tyr-35 is a binding site for ATP. Residue Glu-81 coordinates Mg(2+). Substrate-binding positions include 82 to 85 (SHNH) and Arg-104. His-83 acts as the Proton acceptor in catalysis. Residue Asp-105 participates in Mg(2+) binding. Gln-230 contributes to the substrate binding site. Asp-258 contributes to the Mg(2+) binding site. 301-303 (ESQ) contacts substrate. ATP is bound by residues Asp-482 and Gly-519. Asn-520 provides a ligand contact to Mg(2+). Ser-522 is a binding site for substrate.

Belongs to the FGAMS family. In terms of assembly, monomer. Part of the FGAM synthase complex composed of 1 PurL, 1 PurQ and 2 PurS subunits.

The protein resides in the cytoplasm. It carries out the reaction N(2)-formyl-N(1)-(5-phospho-beta-D-ribosyl)glycinamide + L-glutamine + ATP + H2O = 2-formamido-N(1)-(5-O-phospho-beta-D-ribosyl)acetamidine + L-glutamate + ADP + phosphate + H(+). Its pathway is purine metabolism; IMP biosynthesis via de novo pathway; 5-amino-1-(5-phospho-D-ribosyl)imidazole from N(2)-formyl-N(1)-(5-phospho-D-ribosyl)glycinamide: step 1/2. Its function is as follows. Part of the phosphoribosylformylglycinamidine synthase complex involved in the purines biosynthetic pathway. Catalyzes the ATP-dependent conversion of formylglycinamide ribonucleotide (FGAR) and glutamine to yield formylglycinamidine ribonucleotide (FGAM) and glutamate. The FGAM synthase complex is composed of three subunits. PurQ produces an ammonia molecule by converting glutamine to glutamate. PurL transfers the ammonia molecule to FGAR to form FGAM in an ATP-dependent manner. PurS interacts with PurQ and PurL and is thought to assist in the transfer of the ammonia molecule from PurQ to PurL. In Methanocaldococcus jannaschii (strain ATCC 43067 / DSM 2661 / JAL-1 / JCM 10045 / NBRC 100440) (Methanococcus jannaschii), this protein is Phosphoribosylformylglycinamidine synthase subunit PurL.